We begin with the raw amino-acid sequence, 654 residues long: MLAWLRHRIRSYNTSTYSSILPSASFGKVYKIGTKLNFTLLALCLLLACSVFFNYFYLADNNGLDIDTKGEEEENVFKDRKMVIFPNNFEITDKNLLEYYLKTLEEPLHPQDTIYRNRFIYKVPDVSYTSQTINLFSGLSQNSQSSKCEDLSSSYSFDVSGPQNKNCDLYKVLGKFLNDDSEYFQEISPLFPKLKEMLVKKEIEKHWFQLIGSSVWLEQYGVHLMTSRIFYSSTGDKVKPVVSLTYVQVFDHEWREIENVELIVPDGEGKYKPMTYPTFLPMSVYHNEKQQQGRFYGVEDPRITLVRNKLGYDEPIIVYNSHHRKITDAKSDNDGESNIHFKAYRSIFMAWLWQNQKGKNNVEEIETGKMKNRVYVKSKELIKPNNKREDKEKNWAPFINYQQRLQQGFDSHVYFMYQFQDLKILKCSLLDEEDCVWEYQFNDKNGAGRLRGGTELVNINQLLTTFDHPEIKRVKDLMPQNREIWIGVARAALEKCGCGDKMYRPNIVILIKDGDDQYRLSHVSPFVGLGIPILPWWPDKGLCDGKNLIIPNGISSWHLNKDEDNSVQDYLTLSISRADSTVDLLHIKGLLKSILFDDPNSKLLELNDYGFNNKNIECAVKSSDAFCKKYGSEYKLNNNKEEDKANGNGKGSSS.

At 1–37 (MLAWLRHRIRSYNTSTYSSILPSASFGKVYKIGTKLN) the chain is on the cytoplasmic side. Residues 38 to 58 (FTLLALCLLLACSVFFNYFYL) form a helical membrane-spanning segment. Topologically, residues 59-654 (ADNNGLDIDT…ANGNGKGSSS (596 aa)) are extracellular.

Belongs to the BMT family.

Its subcellular location is the membrane. Beta-mannosyltransferase involved in cell wall biosynthesis. Required for the addition of beta-mannose to the acid-labile fraction of cell wall phosphopeptidomannan. In Candida albicans (strain SC5314 / ATCC MYA-2876) (Yeast), this protein is Beta-mannosyltransferase 2 (RHD1).